We begin with the raw amino-acid sequence, 258 residues long: MDLLVAHGGDPAGSNMARYLAEGMEPDGKIWHGRHFDLVIIDSPAISADWIGGEYEYDGYVFLSRHGAESGKLALTCHSTGNFAEAQFGGSDREVAIPYPGFQRRYMRRLSERREKFNGFDITIEATHHGPTGLDKPSIFVEVGTTEKQWNDKGLCGAVAELVRETAEEQDEKTPFVICVGGTHYPEKFTDVLLKGEYALGTVVPKRALVNLDDKMFSHILERNAGAAAVLVDEGGLGPEKRRILNMLEGSGLEVISA.

The protein belongs to the DtdA deacylase family. In terms of assembly, monomer. Requires Zn(2+) as cofactor.

It carries out the reaction a D-aminoacyl-tRNA + H2O = a tRNA + a D-alpha-amino acid + H(+). The catalysed reaction is glycyl-tRNA(Ala) + H2O = tRNA(Ala) + glycine + H(+). D-aminoacyl-tRNA deacylase with broad substrate specificity. By recycling D-aminoacyl-tRNA to D-amino acids and free tRNA molecules, this enzyme counteracts the toxicity associated with the formation of D-aminoacyl-tRNA entities in vivo. This Cenarchaeum symbiosum (strain A) protein is D-aminoacyl-tRNA deacylase.